We begin with the raw amino-acid sequence, 207 residues long: Large ribosomal subunit protein uL4 (207 aa).

The tract at residues 50 to 75 (KTKTRSEVAGSGKKPFKQKGTGNARQ) is disordered.

The protein belongs to the universal ribosomal protein uL4 family. In terms of assembly, part of the 50S ribosomal subunit.

Functionally, one of the primary rRNA binding proteins, this protein initially binds near the 5'-end of the 23S rRNA. It is important during the early stages of 50S assembly. It makes multiple contacts with different domains of the 23S rRNA in the assembled 50S subunit and ribosome. Its function is as follows. Forms part of the polypeptide exit tunnel. This is Large ribosomal subunit protein uL4 from Pelobacter propionicus (strain DSM 2379 / NBRC 103807 / OttBd1).